The chain runs to 113 residues: Nucleoid-associated protein CLJ_B0037 (113 aa).

Residues 93 to 102 (EEDTSSEVKR) are compositionally biased toward basic and acidic residues. The segment at 93-113 (EEDTSSEVKRLTGGMNLPGMF) is disordered.

This sequence belongs to the YbaB/EbfC family. Homodimer.

It is found in the cytoplasm. Its subcellular location is the nucleoid. In terms of biological role, binds to DNA and alters its conformation. May be involved in regulation of gene expression, nucleoid organization and DNA protection. This Clostridium botulinum (strain 657 / Type Ba4) protein is Nucleoid-associated protein CLJ_B0037.